The following is a 310-amino-acid chain: Protoheme IX farnesyltransferase 2 (310 aa).

The next 9 membrane-spanning stretches (helical) occupy residues Pro-25–Gly-45, Leu-49–Ile-69, His-98–Thr-118, Leu-121–Met-141, Ser-145–Cys-165, Val-176–Phe-196, Ile-222–Thr-242, Ala-245–Tyr-265, and Gln-277–Phe-297.

This sequence belongs to the UbiA prenyltransferase family. Protoheme IX farnesyltransferase subfamily.

The protein resides in the cell inner membrane. It catalyses the reaction heme b + (2E,6E)-farnesyl diphosphate + H2O = Fe(II)-heme o + diphosphate. It functions in the pathway porphyrin-containing compound metabolism; heme O biosynthesis; heme O from protoheme: step 1/1. Its function is as follows. Converts heme B (protoheme IX) to heme O by substitution of the vinyl group on carbon 2 of heme B porphyrin ring with a hydroxyethyl farnesyl side group. This is Protoheme IX farnesyltransferase 2 from Shewanella sp. (strain ANA-3).